The following is a 356-amino-acid chain: Galactosylgalactosylxylosylprotein 3-beta-glucuronosyltransferase sqv-8 (356 aa).

The Cytoplasmic portion of the chain corresponds to 1–9 (MFPSRLLEK). A helical; Signal-anchor for type II membrane protein membrane pass occupies residues 10-30 (WWLRAFIALVIFFVWQLFYAI). Topologically, residues 31 to 356 (NRVQSLEEER…LEAHALGVDN (326 aa)) are lumenal. N-linked (GlcNAc...) asparagine glycosylation is found at Asn-93 and Asn-173. Asp-208 serves as a coordination point for Mn(2+). Residues Asn-246 and Asn-272 are each glycosylated (N-linked (GlcNAc...) asparagine). Glu-294 acts as the Proton acceptor in catalysis.

The protein belongs to the glycosyltransferase 43 family.

The protein resides in the membrane. It catalyses the reaction 3-O-(beta-D-galactosyl-(1-&gt;3)-beta-D-galactosyl-(1-&gt;4)-beta-D-xylosyl)-L-seryl-[protein] + UDP-alpha-D-glucuronate = 3-O-(beta-D-GlcA-(1-&gt;3)-beta-D-Gal-(1-&gt;3)-beta-D-Gal-(1-&gt;4)-beta-D-Xyl)-L-seryl-[protein] + UDP + H(+). Its function is as follows. Glycosyltransferase required for the biosynthesis of the tetrasaccharide (GlcA-Gal-Gal-Xyl-)Ser core linker of heparan sulfate and chondroitin sulfate. May be involved in the biosynthesis of the HNK-1 carbohydrate epitope on glycoproteins. Required for embryonic development. Involved in the elongation of the pharyngeal isthmus during the later stages of embryonic development. Involved in vulval epithelium invagination. In Caenorhabditis elegans, this protein is Galactosylgalactosylxylosylprotein 3-beta-glucuronosyltransferase sqv-8 (sqv-8).